The sequence spans 208 residues: Ubiquitin-conjugating enzyme E2 S (208 aa).

In terms of domain architecture, UBC core spans 14-160; that stretch reads QTIRQVMKEL…ARMMTEIHAQ (147 aa). Cysteine 98 (glycyl thioester intermediate) is an active-site residue. The segment at 161-196 is disordered; that stretch reads PAKCGAGASDAKDDDGPSTKKHAGVDKKLQDKKKEK. Residues 170-196 are compositionally biased toward basic and acidic residues; that stretch reads DAKDDDGPSTKKHAGVDKKLQDKKKEK.

This sequence belongs to the ubiquitin-conjugating enzyme family.

It carries out the reaction S-ubiquitinyl-[E1 ubiquitin-activating enzyme]-L-cysteine + [E2 ubiquitin-conjugating enzyme]-L-cysteine = [E1 ubiquitin-activating enzyme]-L-cysteine + S-ubiquitinyl-[E2 ubiquitin-conjugating enzyme]-L-cysteine.. Its pathway is protein modification; protein ubiquitination. Its function is as follows. Catalyzes the covalent attachment of ubiquitin to other proteins. Acts as an essential factor of the anaphase promoting complex/cyclosome (APC/C), a cell cycle-regulated ubiquitin ligase that controls progression through mitosis. Acts by specifically elongating polyubiquitin chains initiated by the E2 enzyme vih/UbcH10 on APC/C substrates, enhancing the degradation of APC/C substrates by the proteasome and promoting mitotic exit. The polypeptide is Ubiquitin-conjugating enzyme E2 S (Drosophila grimshawi (Hawaiian fruit fly)).